The following is a 99-amino-acid chain: Integration host factor subunit alpha (99 aa).

The interval 49 to 72 (FGNFDLRDKNQRPGRNPKTGEDIP) is disordered.

Belongs to the bacterial histone-like protein family. Heterodimer of an alpha and a beta chain.

Functionally, this protein is one of the two subunits of integration host factor, a specific DNA-binding protein that functions in genetic recombination as well as in transcriptional and translational control. The sequence is that of Integration host factor subunit alpha from Escherichia coli O9:H4 (strain HS).